The primary structure comprises 165 residues: Small ribosomal subunit protein bS16 (165 aa).

The disordered stretch occupies residues 110 to 165 (LSEANNGPTAEAITEKKKKAREDKEAKEAAEKAAAEKAAAAESEEAPAEEAAAEEA). The segment covering 129–144 (AREDKEAKEAAEKAAA) has biased composition (basic and acidic residues). The span at 151–165 (ESEEAPAEEAAAEEA) shows a compositional bias: acidic residues.

It belongs to the bacterial ribosomal protein bS16 family.

The sequence is that of Small ribosomal subunit protein bS16 from Corynebacterium glutamicum (strain R).